The following is a 641-amino-acid chain: Chaperone protein DnaK (641 aa).

A Phosphothreonine; by autocatalysis modification is found at Thr201. Positions 604–622 (ASAEQGGAAPGADAGNAGK) are enriched in low complexity. Residues 604 to 625 (ASAEQGGAAPGADAGNAGKAQD) form a disordered region.

It belongs to the heat shock protein 70 family.

In terms of biological role, acts as a chaperone. This Stenotrophomonas maltophilia (strain R551-3) protein is Chaperone protein DnaK.